The sequence spans 601 residues: MFGFVSDLLTAAVSSLDELLQDTPAHQIILGTAALYFLYNQYHNPSISRWYRSRNNASMKQRIIDSAYALAKNLPGVNQIIEKELNKELSSTREKLRIQRSGMTLREEIPEEGLSPQDILSAFDVDVEKCHFDFLSVTNDSPEREFLVERGDGKDSGALYAIHPKELTELLKEVYGATALTNPLHDKWPRINAMQAEVIRWCQNLFHGSKECYGLLTHGGTTSIIEAMAAYVIRARAKGIDYPEIVVPETAHAAFKKAAELTGAILITVPVDKKTGAVNPKVMSSYITRNTAVIVGSAPSFMNGIHDPVSELGQLAKKKNVPFHVDACLGGFLTAFLDTSSEPMDFRVPGVTSISADLHKYGCCPKGTSVCLFSEDSPALSVYAALNWSGGLYATPGILDGSTSGARVAEVYATLSYYGKNKYQEIAKSIITLRNAIQKELTTLLEEGNGLTSEDIYVYGNPQWSILGFRSNTCNAHFIADELEKRGWKLNLLQNPDGFHLCLTHVHTLVKGFETQFIKDLREAVIDVKNYPPGKKPSGNVKVYGAVGMMPIELQREICKQYQKARLNYTSASPGSLRIFTNVPVEEDEGLRNRKTEKYKV.

An N6-(pyridoxal phosphate)lysine modification is found at Lys-360.

The protein belongs to the group II decarboxylase family. Sphingosine-1-phosphate lyase subfamily. Requires pyridoxal 5'-phosphate as cofactor.

The enzyme catalyses sphinganine 1-phosphate = hexadecanal + phosphoethanolamine. Its function is as follows. Cleaves phosphorylated sphingoid bases (PSBs), such as sphingosine-1-phosphate, into fatty aldehydes and phosphoethanolamine. Possibly implicated in influencing the macrophage autophagy pathway. This is Probable sphingosine-1-phosphate lyase from Legionella pneumophila subsp. pneumophila (strain Philadelphia 1 / ATCC 33152 / DSM 7513).